The chain runs to 248 residues: Type II secretion system protein N (248 aa).

The Cytoplasmic segment spans residues 1-6 (MKLKSG). A helical; Signal-anchor for type II membrane protein transmembrane segment spans residues 7–27 (IVTGVALVLAYGLFLASYAPA). The Periplasmic segment spans residues 28–248 (RLLTAVPLPA…RTLNFQGRLL (221 aa)).

The protein belongs to the GSP N family.

It localises to the cell inner membrane. Functionally, involved in a type II secretion system (T2SS, formerly general secretion pathway, GSP) for the export of proteins. Required for the translocation of the multiple pectic enzymes. This chain is Type II secretion system protein N (outN), found in Pectobacterium carotovorum subsp. carotovorum (Erwinia carotovora subsp. carotovora).